A 170-amino-acid polypeptide reads, in one-letter code: ATP synthase subunit b (170 aa).

The chain crosses the membrane as a helical span at residues 15-37 (FNLFETNILNWAVVVFGLYKFLP).

It belongs to the ATPase B chain family. F-type ATPases have 2 components, F(1) - the catalytic core - and F(0) - the membrane proton channel. F(1) has five subunits: alpha(3), beta(3), gamma(1), delta(1), epsilon(1). F(0) has four main subunits: a(1), b(1), b'(1) and c(10-14). The alpha and beta chains form an alternating ring which encloses part of the gamma chain. F(1) is attached to F(0) by a central stalk formed by the gamma and epsilon chains, while a peripheral stalk is formed by the delta, b and b' chains.

The protein localises to the cellular thylakoid membrane. Its function is as follows. F(1)F(0) ATP synthase produces ATP from ADP in the presence of a proton or sodium gradient. F-type ATPases consist of two structural domains, F(1) containing the extramembraneous catalytic core and F(0) containing the membrane proton channel, linked together by a central stalk and a peripheral stalk. During catalysis, ATP synthesis in the catalytic domain of F(1) is coupled via a rotary mechanism of the central stalk subunits to proton translocation. In terms of biological role, component of the F(0) channel, it forms part of the peripheral stalk, linking F(1) to F(0). In Prochlorococcus marinus (strain MIT 9312), this protein is ATP synthase subunit b.